Consider the following 149-residue polypeptide: Ribosome-binding factor A (149 aa).

The segment at 124–149 (AKLREGAVPAGDADPYKTSSKSESEE) is disordered.

It belongs to the RbfA family. In terms of assembly, monomer. Binds 30S ribosomal subunits, but not 50S ribosomal subunits or 70S ribosomes.

The protein resides in the cytoplasm. In terms of biological role, one of several proteins that assist in the late maturation steps of the functional core of the 30S ribosomal subunit. Associates with free 30S ribosomal subunits (but not with 30S subunits that are part of 70S ribosomes or polysomes). Required for efficient processing of 16S rRNA. May interact with the 5'-terminal helix region of 16S rRNA. The protein is Ribosome-binding factor A of Corynebacterium glutamicum (strain R).